An 84-amino-acid chain; its full sequence is Small ribosomal subunit protein uS17 (84 aa).

Belongs to the universal ribosomal protein uS17 family. Part of the 30S ribosomal subunit.

Functionally, one of the primary rRNA binding proteins, it binds specifically to the 5'-end of 16S ribosomal RNA. In Photorhabdus laumondii subsp. laumondii (strain DSM 15139 / CIP 105565 / TT01) (Photorhabdus luminescens subsp. laumondii), this protein is Small ribosomal subunit protein uS17.